Consider the following 376-residue polypeptide: Formate dehydrogenase 1 (376 aa).

Residues Val97 and Asn121 each contribute to the substrate site. Residues Arg176 to Ile177, Asp197, Pro244 to Asp248, Thr270, Asp296, and His325 to Gly328 each bind NAD(+).

The protein belongs to the D-isomer specific 2-hydroxyacid dehydrogenase family. FDH subfamily. Homodimer.

It is found in the cytoplasm. It catalyses the reaction formate + NAD(+) = CO2 + NADH. Catalyzes the NAD(+)-dependent oxidation of formate to carbon dioxide. Formate oxidation is the final step in the methanol oxidation pathway in methylotrophic microorganisms. Has a role in the detoxification of exogenous formate in non-methylotrophic organisms. This Saccharomyces cerevisiae (strain YJM789) (Baker's yeast) protein is Formate dehydrogenase 1 (FDH1).